We begin with the raw amino-acid sequence, 407 residues long: Phosphopentomutase (407 aa).

6 residues coordinate Mn(2+): Asp10, Asp306, His311, Asp347, His348, and His359.

The protein belongs to the phosphopentomutase family. It depends on Mn(2+) as a cofactor.

Its subcellular location is the cytoplasm. It carries out the reaction 2-deoxy-alpha-D-ribose 1-phosphate = 2-deoxy-D-ribose 5-phosphate. The catalysed reaction is alpha-D-ribose 1-phosphate = D-ribose 5-phosphate. It participates in carbohydrate degradation; 2-deoxy-D-ribose 1-phosphate degradation; D-glyceraldehyde 3-phosphate and acetaldehyde from 2-deoxy-alpha-D-ribose 1-phosphate: step 1/2. Functionally, isomerase that catalyzes the conversion of deoxy-ribose 1-phosphate (dRib-1-P) and ribose 1-phosphate (Rib-1-P) to deoxy-ribose 5-phosphate (dRib-5-P) and ribose 5-phosphate (Rib-5-P), respectively. This chain is Phosphopentomutase, found in Buchnera aphidicola subsp. Acyrthosiphon pisum (strain 5A).